We begin with the raw amino-acid sequence, 192 residues long: MKTFALILADGQASRMGGEDKGLALLGGKALIDHVIDRVRPQVSHIAISTNRNLEEYARRSPHIFPDARQWQHFGPLSALCTAANDLQLATADWLLVVPCDMPYLPGDLVARFETVSKRTPLCNAYYVETPITMHYNIMYIRPQILQSAIPYLFSGMKTLRSWLQQQRARPVRFEFDGHFADLNTQIDLQEG.

Residues K21, D67, and D101 each coordinate GTP. Position 101 (D101) interacts with Mg(2+).

Belongs to the MobA family. Monomer. Mg(2+) is required as a cofactor.

It is found in the cytoplasm. The catalysed reaction is Mo-molybdopterin + GTP + H(+) = Mo-molybdopterin guanine dinucleotide + diphosphate. Functionally, transfers a GMP moiety from GTP to Mo-molybdopterin (Mo-MPT) cofactor (Moco or molybdenum cofactor) to form Mo-molybdopterin guanine dinucleotide (Mo-MGD) cofactor. The polypeptide is Molybdenum cofactor guanylyltransferase (Neisseria meningitidis serogroup C / serotype 2a (strain ATCC 700532 / DSM 15464 / FAM18)).